The sequence spans 220 residues: Artemin (220 aa).

The first 39 residues, 1–39 (MELGLGGLSTLSHCPWPRQQPALWPTLAALALLSSVAEA), serve as a signal peptide directing secretion. Residues 40 to 107 (SLGSAPRSPA…ALPRGGRAAR (68 aa)) constitute a propeptide that is removed on maturation. Residues 41-121 (LGSAPRSPAP…GSRARAAGAR (81 aa)) are disordered. 2 stretches are compositionally biased toward pro residues: residues 47–58 (SPAPREGPPPVL) and 81–98 (PPPQ…PPSA). The segment covering 99–121 (LPRGGRAARAGGPGSRARAAGAR) has biased composition (low complexity). Cystine bridges form between Cys-123-Cys-188, Cys-150-Cys-216, and Cys-154-Cys-218. Asn-202 carries an N-linked (GlcNAc...) asparagine glycan.

This sequence belongs to the TGF-beta family. GDNF subfamily. In terms of assembly, homodimer; disulfide-linked. Interacts with GFRA3 coreceptor and RET: forms a 2:2:2 ternary complex composed of ARTN ligand, GFRA3 and RET receptor. As to expression, ubiquitous. Expressed at high levels in peripheral tissues including prostate, placenta, pancreas, heart, kidney, pituitary gland, lung and testis. Expressed at low levels in the brain.

It is found in the secreted. Its function is as follows. Growth factor that supports the survival of sensory and sympathetic peripheral neurons in culture and also supports the survival of dopaminergic neurons of the ventral mid-brain. Acts by binding to its coreceptor, GFRA3, leading to autophosphorylation and activation of the RET receptor. Strong attractant of gut hematopoietic cells thus promoting the formation Peyer's patch-like structures, a major component of the gut-associated lymphoid tissue. The chain is Artemin from Homo sapiens (Human).